The chain runs to 128 residues: Azurin (128 aa).

In terms of domain architecture, Plastocyanin-like spans 1-128; the sequence is AECSVDIQGN…ALMKGTLTLK (128 aa). Cys-3 and Cys-26 are disulfide-bonded. Residues His-46, Cys-112, His-117, and Met-121 each coordinate Cu cation.

The protein resides in the periplasm. Transfers electrons from cytochrome c551 to cytochrome oxidase. The polypeptide is Azurin (Pseudomonas aeruginosa).